The sequence spans 314 residues: Methionyl-tRNA formyltransferase (314 aa).

A (6S)-5,6,7,8-tetrahydrofolate-binding site is contributed by 110–113 (SLLP).

It belongs to the Fmt family.

It catalyses the reaction L-methionyl-tRNA(fMet) + (6R)-10-formyltetrahydrofolate = N-formyl-L-methionyl-tRNA(fMet) + (6S)-5,6,7,8-tetrahydrofolate + H(+). In terms of biological role, attaches a formyl group to the free amino group of methionyl-tRNA(fMet). The formyl group appears to play a dual role in the initiator identity of N-formylmethionyl-tRNA by promoting its recognition by IF2 and preventing the misappropriation of this tRNA by the elongation apparatus. The protein is Methionyl-tRNA formyltransferase of Bacillus anthracis (strain A0248).